The sequence spans 92 residues: Small ribosomal subunit protein uS19 (92 aa).

Its function is as follows. Protein S19 forms a complex with S13 that binds strongly to the 16S ribosomal RNA. The polypeptide is Small ribosomal subunit protein uS19 (Rhodopseudomonas palustris (strain ATCC BAA-98 / CGA009)).